Reading from the N-terminus, the 185-residue chain is Elongation factor P (185 aa).

It belongs to the elongation factor P family.

The protein localises to the cytoplasm. It participates in protein biosynthesis; polypeptide chain elongation. In terms of biological role, involved in peptide bond synthesis. Stimulates efficient translation and peptide-bond synthesis on native or reconstituted 70S ribosomes in vitro. Probably functions indirectly by altering the affinity of the ribosome for aminoacyl-tRNA, thus increasing their reactivity as acceptors for peptidyl transferase. The polypeptide is Elongation factor P (Staphylococcus aureus (strain Mu3 / ATCC 700698)).